Consider the following 246-residue polypeptide: Putative carbonic anhydrase 3 (246 aa).

Residues 3-244 (GHWSYCDDDE…LNDRKIVHIV (242 aa)) form the Alpha-carbonic anhydrase domain. The active-site Proton acceptor is His-61. Positions 91, 93, and 116 each coordinate Zn(2+). 187–188 (TT) contributes to the substrate binding site.

The protein belongs to the alpha-carbonic anhydrase family. Zn(2+) serves as cofactor.

It carries out the reaction hydrogencarbonate + H(+) = CO2 + H2O. Its function is as follows. Reversible hydration of carbon dioxide. The chain is Putative carbonic anhydrase 3 (cah-3) from Caenorhabditis elegans.